The sequence spans 200 residues: Riboflavin kinase (200 aa).

A disordered region spans residues 1–20 (MATARPSIVGPDSGPESPFP). Mg(2+) contacts are provided by threonine 42 and asparagine 44. The active-site Nucleophile is the glutamate 110.

It belongs to the flavokinase family. The cofactor is Zn(2+). Requires Mg(2+) as cofactor.

It carries out the reaction riboflavin + ATP = FMN + ADP + H(+). It functions in the pathway cofactor biosynthesis; FMN biosynthesis; FMN from riboflavin (ATP route): step 1/1. In terms of biological role, catalyzes the phosphorylation of riboflavin (vitamin B2) to form flavin mononucleotide (FMN) coenzyme. This chain is Riboflavin kinase (FMN1), found in Pyricularia oryzae (strain 70-15 / ATCC MYA-4617 / FGSC 8958) (Rice blast fungus).